A 697-amino-acid chain; its full sequence is Probable potassium transporter 4 (697 aa).

At 1-29 (MSSSHTVTVSMDVEAGQKNKDKKGISQDL) the chain is on the cytoplasmic side. A helical membrane pass occupies residues 30-50 (ILAYKTLGVVFGGLVTSPLYV). At 51-66 (YPSMNLTNPTEEDYLG) the chain is on the extracellular side. An N-linked (GlcNAc...) asparagine glycan is attached at asparagine 55. Residues 67–87 (IYSIMFWTLTLIGVVKYICIA) traverse the membrane as a helical segment. The Cytoplasmic portion of the chain corresponds to 88-152 (LNADDHGEGG…FIESSIIARR (65 aa)). The helical transmembrane segment at 153-173 (LLLLTAILGMCMLIGDGILTP) threads the bilayer. Residues 174–189 (AISVLSAIDGLRGPFP) lie on the Extracellular side of the membrane. Residues 190–210 (SVSKPAVEGLSAAILVGLFLL) traverse the membrane as a helical segment. The Cytoplasmic segment spans residues 211-217 (QKYGTSK). The helical transmembrane segment at 218 to 238 (VSFMFSPIMAAWTFATPVIGV) threads the bilayer. The Extracellular segment spans residues 239–271 (YSIWRYYPGIFKAMSPHYIVRFFMTNQTRGWQL). Asparagine 264 carries an N-linked (GlcNAc...) asparagine glycan. Residues 272–292 (LGGTVLCITGAEAMFADLGHF) traverse the membrane as a helical segment. At 293 to 300 (SKRSIQIA) the chain is on the cytoplasmic side. Residues 301 to 321 (FMSSIYPSLVLTYAGQTAYLI) traverse the membrane as a helical segment. Residues 322-338 (NNVDDFSDGFYKFVPRP) are Extracellular-facing. The chain crosses the membrane as a helical span at residues 339-359 (VYWPMFIIATLAAIVASQSLI). The Cytoplasmic segment spans residues 360 to 390 (SATFSVIKQSVVLDYFPRVKVVHTSKDKEGE). The chain crosses the membrane as a helical span at residues 391–411 (VYSPETNYMLMLLCVGVILGF). At 412 to 422 (GDGKDIGNAFG) the chain is on the extracellular side. Residues 423-443 (VVVILVMLITTILLTLVMLII) traverse the membrane as a helical segment. At 444–447 (WGTH) the chain is on the cytoplasmic side. The helical transmembrane segment at 448–468 (VVLVALYLVPFLLLEATYVSA) threads the bilayer. Topologically, residues 469–475 (VCTKILR) are extracellular. A helical transmembrane segment spans residues 476–496 (GGWVPFAVSVALAAVMFGWYY). The Cytoplasmic segment spans residues 497–697 (GRQRKTEYEA…RVEIGMLYKA (201 aa)).

Belongs to the HAK/KUP transporter (TC 2.A.72.3) family.

It is found in the membrane. Its function is as follows. High-affinity potassium transporter. The chain is Probable potassium transporter 4 (HAK4) from Oryza sativa subsp. japonica (Rice).